The sequence spans 279 residues: Zinc-finger homeodomain protein 1 (279 aa).

The segment covering 1–13 has biased composition (acidic residues); that stretch reads MDFDDHDDGDEEM. Residues 1–47 form a disordered region; it reads MDFDDHDDGDEEMPPMPVSSSYETPPQHGLAGGGMAPKPPGEIGSRV. The ZF-HD dimerization-type; degenerate zinc-finger motif lies at 57–106; it reads YRECLKNHAVGIGGHAVDGCGEFMAAGEEGTIDALRCAACNCHRNFHRKE. A disordered region spans residues 168–190; sequence RPLALPSTSHSGRDDGDDLSGMV. Residues 215–278 constitute a DNA-binding region (homeobox); that stretch reads KKRFRTKFTQ…NNKHTLGKKL (64 aa).

In terms of assembly, homo- and heterodimer with other ZFHD proteins.

The protein localises to the nucleus. Functionally, putative transcription factor. This Oryza sativa subsp. japonica (Rice) protein is Zinc-finger homeodomain protein 1 (ZHD1).